The sequence spans 492 residues: E1B 55 kDa protein (492 aa).

The interval 22–112 is disordered; that stretch reads ENMEGSQDED…ERNPSGNNSR (91 aa). The span at 34–44 shows a compositional bias: low complexity; it reads RLLASAASGSS. Phosphoserine occurs at positions 486 and 487. T491 is subject to Phosphothreonine.

The protein belongs to the adenoviridae E1B 55 kDa protein family. Interacts with host PML-4 and PML-5; this interaction promotes efficient subnuclear targeting of E1B-55K to PML nuclear bodies. Interacts with E4-ORF3 protein. Interacts with E4-ORF6 protein.

The protein resides in the host nucleus. Its subcellular location is the host cytoplasm. In terms of biological role, plays a major role to prevent cellular inhibition of viral genome replication. Assembles an SCF-like E3 ubiquitin ligase complex based on the cellular proteins ELOB, ELOC, CUL5 and RBX1, in cooperation with viral E4orf6. This viral RING-type ligase ubiquitinates cellular substrates and targets them to proteasomal degradation: TP53/p53, LIG4, MRE11-RAD50-NBS1 (MRN) complex, ITGA3, DAXX and BLM. E1B-55K probably acts as the substrate-specific adapter of the SCF-like E3 ubiquitin ligase complex. Degradation of host TP53/p53 activity is essential for preventing E1A-induced TP53 accumulation that would otherwise lead to cell apoptosis and growth arrest. E1B-55K also inactivates TP53 transcription-factor activity by binding its transactivation domain. E1B-55K also functions as a SUMO1 E3 ligase for TP53 which causes the latter to be sequestered in promyelocytic leukemia (PML) nuclear bodies thereby contributing to maximal inhibition of TP53 function. This is E1B 55 kDa protein from Human adenovirus B serotype 7 (HAdV-7).